The following is a 197-amino-acid chain: Large ribosomal subunit protein bL9 (197 aa).

The tract at residues 178 to 197 (GEFFDPEAQEDEAAAGETAQ) is disordered. Residues 181–191 (FDPEAQEDEAA) show a composition bias toward acidic residues.

It belongs to the bacterial ribosomal protein bL9 family.

In terms of biological role, binds to the 23S rRNA. The sequence is that of Large ribosomal subunit protein bL9 from Bradyrhizobium sp. (strain BTAi1 / ATCC BAA-1182).